The chain runs to 2554 residues: Protein sevenless (2554 aa).

Polar residues predominate over residues 1-10; sequence MTMFWQQNVD. A disordered region spans residues 1 to 25; it reads MTMFWQQNVDHQSDEQDKQAKGAAP. The Extracellular segment spans residues 1–2123; it reads MTMFWQQNVD…AEPFVSPEKR (2123 aa). A compositionally biased stretch (basic and acidic residues) spans 11–20; that stretch reads HQSDEQDKQA. Asn-30 carries N-linked (GlcNAc...) asparagine glycosylation. Positions 51-70 are enriched in low complexity; that stretch reads NQQAPGTSSSSSNSQNASPS. The disordered stretch occupies residues 51–75; the sequence is NQQAPGTSSSSSNSQNASPSKIVVR. The N-linked (GlcNAc...) asparagine glycan is linked to Asn-129. A disordered region spans residues 181–208; it reads SRPQSTMAHHPDDRDRDRDPSEEQHGVD. Positions 189–208 are enriched in basic and acidic residues; sequence HHPDDRDRDRDPSEEQHGVD. In terms of domain architecture, Fibronectin type-III 1 spans 440 to 533; it reads APVIEHLMGL…GFVQTHSARN (94 aa). Asn-481, Asn-505, Asn-617, and Asn-647 each carry an N-linked (GlcNAc...) asparagine glycan. Residues 824–924 form the Fibronectin type-III 2 domain; the sequence is AGGKPHSLKA…EPLAARTWPL (101 aa). Asn-966 carries an N-linked (GlcNAc...) asparagine glycan. One copy of the LDL-receptor class B repeat lies at 1010–1053; that stretch reads GRVYWTDLARNCVVRMDPWSGSRELLPVFEANFLALDPRQGHLY. Fibronectin type-III domains are found at residues 1202-1290 and 1294-1397; these read LPDS…TPPV and QPRR…VAPE. N-linked (GlcNAc...) asparagine glycosylation is found at Asn-1228, Asn-1313, Asn-1353, Asn-1550, Asn-1557, Asn-1639, Asn-1725, Asn-1756, Asn-1804, Asn-1889, Asn-1947, and Asn-2073. Fibronectin type-III domains follow at residues 1801–1901, 1902–1988, and 1995–2117; these read PPRN…SFAE, LPEL…VYET, and QPGK…AEPF. A helical membrane pass occupies residues 2124–2147; it reads GSLVLAIIAPAAIVSSCVLALVLV. At 2148–2554 the chain is on the cytoplasmic side; it reads RKVQKRRLRA…LYANEGVSRL (407 aa). The 277-residue stretch at 2209–2485 folds into the Protein kinase domain; sequence LKLLRFLGSG…RCYNTLHAIS (277 aa). Residues 2215–2223 and Lys-2242 each bind ATP; that span reads LGSGAFGEV. The active-site Proton acceptor is Asp-2343. Tyr-2380 bears the Phosphotyrosine; by autocatalysis mark. Basic and acidic residues predominate over residues 2515 to 2527; that stretch reads GQPLEEHREHNER. Residues 2515 to 2534 are disordered; it reads GQPLEEHREHNERPEDENLT.

The protein belongs to the protein kinase superfamily. Tyr protein kinase family. Insulin receptor subfamily. As to quaternary structure, may form a complex with drk and Sos. Binds the phosphotyrosine interaction domain (PID) of Dab.

The protein resides in the cell membrane. The catalysed reaction is L-tyrosyl-[protein] + ATP = O-phospho-L-tyrosyl-[protein] + ADP + H(+). Its function is as follows. Receptor for an extracellular signal required to instruct a cell to differentiate into an R7 photoreceptor. The ligand for sev is the boss (bride of sevenless) protein on the surface of the neighboring R8 cell. This chain is Protein sevenless (sev), found in Drosophila melanogaster (Fruit fly).